The chain runs to 491 residues: Lysine--tRNA ligase (491 aa).

The Mg(2+) site is built by Glu-399 and Glu-406.

The protein belongs to the class-II aminoacyl-tRNA synthetase family. In terms of assembly, homodimer. Mg(2+) is required as a cofactor.

Its subcellular location is the cytoplasm. The enzyme catalyses tRNA(Lys) + L-lysine + ATP = L-lysyl-tRNA(Lys) + AMP + diphosphate. This chain is Lysine--tRNA ligase, found in Chloroflexus aurantiacus (strain ATCC 29366 / DSM 635 / J-10-fl).